The sequence spans 144 residues: Large ribosomal subunit protein uL15 (144 aa).

A disordered region spans residues 1 to 49 (MRLNTLSPAAGSKSAPKRVGRGIGSGLGKTAGRGHKGQKSRSGGGVRVG). The span at 21-31 (RGIGSGLGKTA) shows a compositional bias: gly residues.

Belongs to the universal ribosomal protein uL15 family. Part of the 50S ribosomal subunit.

Functionally, binds to the 23S rRNA. This chain is Large ribosomal subunit protein uL15, found in Shewanella denitrificans (strain OS217 / ATCC BAA-1090 / DSM 15013).